The sequence spans 1193 residues: Kinesin-related protein 3 (1193 aa).

The 327-residue stretch at 3–329 (SIRVVCRFRP…LRFGSRAKNI (327 aa)) folds into the Kinesin motor domain. 85–92 (GQTGSGKT) provides a ligand contact to ATP. 7 disordered regions span residues 377–429 (KSSG…SSNV), 573–600 (SSIA…KHAD), 611–630 (LLQR…TATS), 638–665 (ISES…ATSS), 973–1016 (GGGG…SANL), 1032–1114 (KAEP…PVKI), and 1127–1193 (FKKK…QQKD). Residues 405–429 (SSNLSNSVNSTSNLNTSSNTSSSNV) are compositionally biased toward low complexity. Positions 450 to 962 (ELIKVLQEKC…SQVGVDAQNT (513 aa)) form a coiled coil. Polar residues-rich tracts occupy residues 573–585 (SSIA…TPKS) and 614–630 (RTPS…TATS). Composition is skewed to low complexity over residues 643-665 (NIGS…ATSS) and 985-1006 (HSSS…NNNH). Positions 1007-1016 (TTPTPLSANL) are enriched in polar residues. 3 stretches are compositionally biased toward low complexity: residues 1044–1078 (NTSI…IGNS), 1086–1109 (NNNS…LNGN), and 1132–1149 (PSST…QSPQ). Composition is skewed to polar residues over residues 1150–1165 (TPSH…ISPN) and 1174–1193 (FSYT…QQKD).

This sequence belongs to the TRAFAC class myosin-kinesin ATPase superfamily. Kinesin family. Kinesin subfamily. Dimer.

It localises to the cytoplasm. The protein localises to the cytoskeleton. Functionally, microtubule-associated force-producing protein that plays a role in organelle transport. Its motor activity is directed toward the microtubule's plus end. The maximal velocity in an inverted motility assay (moving microtubules on fixed motors) was 1.96 um/s. The polypeptide is Kinesin-related protein 3 (kif3) (Dictyostelium discoideum (Social amoeba)).